Consider the following 627-residue polypeptide: Transketolase-like protein 2 (627 aa).

Residue histidine 39 participates in substrate binding. Thiamine diphosphate is bound by residues serine 42, histidine 79, and 125–127; that span reads GSL. Aspartate 157 is a binding site for Mg(2+). Glycine 158 and asparagine 187 together coordinate thiamine diphosphate. Mg(2+) contacts are provided by asparagine 187 and leucine 189. 2 residues coordinate thiamine diphosphate: lysine 249 and histidine 263. Residues histidine 263, arginine 323, and serine 350 each coordinate substrate. Thiamine diphosphate is bound by residues glutamate 371 and phenylalanine 397. Glutamate 371 functions as the Proton donor in the catalytic mechanism. Substrate-binding residues include histidine 421 and aspartate 429. Glutamine 433 is a thiamine diphosphate binding site. Position 479 (arginine 479) interacts with substrate.

This sequence belongs to the transketolase family. In terms of assembly, homodimer. It depends on Mg(2+) as a cofactor. Requires Ca(2+) as cofactor. The cofactor is Mn(2+). Co(2+) is required as a cofactor. Thiamine diphosphate serves as cofactor.

It catalyses the reaction D-sedoheptulose 7-phosphate + D-glyceraldehyde 3-phosphate = aldehydo-D-ribose 5-phosphate + D-xylulose 5-phosphate. Plays an essential role in total transketolase activity and cell proliferation in cancer cells; after transfection with anti-TKTL1 siRNA, total transketolase activity dramatically decreases and proliferation was significantly inhibited in cancer cells. Plays a pivotal role in carcinogenesis. This chain is Transketolase-like protein 2 (Tktl2), found in Mus musculus (Mouse).